Here is a 186-residue protein sequence, read N- to C-terminus: Lipid A palmitoyltransferase PagP (186 aa).

A signal peptide spans 1–25 (MNVSKYVAIFSFVFIQLISVGKVFA). Residues His-58, Asp-101, and Ser-102 contribute to the active site.

This sequence belongs to the lipid A palmitoyltransferase family. In terms of assembly, homodimer.

The protein localises to the cell outer membrane. It catalyses the reaction lipid A (E. coli) + a 1-hexadecanoyl-2-acyl-sn-glycero-3-phosphocholine = hepta-acyl lipid A (E. coli) + a 2-acyl-sn-glycero-3-phosphocholine. The enzyme catalyses lipid IIA + a 1-hexadecanoyl-2-acyl-sn-glycero-3-phosphocholine = lipid IIB + a 2-acyl-sn-glycero-3-phosphocholine. It carries out the reaction lipid IVA (E. coli) + a 1-hexadecanoyl-2-acyl-sn-glycero-3-phosphocholine = lipid IVB (E. coli) + a 2-acyl-sn-glycero-3-phosphocholine. Its function is as follows. Transfers a palmitate residue from the sn-1 position of a phospholipid to the N-linked hydroxymyristate on the proximal unit of lipid A or its precursors. The chain is Lipid A palmitoyltransferase PagP from Escherichia coli O157:H7.